The sequence spans 573 residues: 2-isopropylmalate synthase (573 aa).

Residues 37–314 (PRWLSTDLRD…DPQIDFSNID (278 aa)) enclose the Pyruvate carboxyltransferase domain. The Mg(2+) site is built by aspartate 46, histidine 253, histidine 255, and asparagine 289. A regulatory domain region spans residues 456-573 (NPRNPWGRIQ…VVSAVNRAAR (118 aa)).

This sequence belongs to the alpha-IPM synthase/homocitrate synthase family. LeuA type 2 subfamily. In terms of assembly, homodimer. Requires Mg(2+) as cofactor.

The protein localises to the cytoplasm. The enzyme catalyses 3-methyl-2-oxobutanoate + acetyl-CoA + H2O = (2S)-2-isopropylmalate + CoA + H(+). It functions in the pathway amino-acid biosynthesis; L-leucine biosynthesis; L-leucine from 3-methyl-2-oxobutanoate: step 1/4. Catalyzes the condensation of the acetyl group of acetyl-CoA with 3-methyl-2-oxobutanoate (2-ketoisovalerate) to form 3-carboxy-3-hydroxy-4-methylpentanoate (2-isopropylmalate). This Streptomyces avermitilis (strain ATCC 31267 / DSM 46492 / JCM 5070 / NBRC 14893 / NCIMB 12804 / NRRL 8165 / MA-4680) protein is 2-isopropylmalate synthase.